The sequence spans 70 residues: Small ribosomal subunit protein bS18c (70 aa).

This sequence belongs to the bacterial ribosomal protein bS18 family. In terms of assembly, part of the 30S ribosomal subunit.

It localises to the plastid. It is found in the chloroplast. This chain is Small ribosomal subunit protein bS18c, found in Gracilaria tenuistipitata var. liui (Red alga).